The following is a 357-amino-acid chain: Protein FAM118A (357 aa).

Residue M1 is modified to N-acetylmethionine. The helical transmembrane segment at 30 to 50 (LLLVIGTGVSAAVAPGIPALC) threads the bilayer. S311 carries the post-translational modification Phosphoserine.

Belongs to the FAM118 family.

It localises to the membrane. This chain is Protein FAM118A (FAM118A), found in Homo sapiens (Human).